We begin with the raw amino-acid sequence, 195 residues long: Cysteine/O-acetylserine efflux protein (195 aa).

At 1–7 (MTPTLLS) the chain is on the periplasmic side. A helical transmembrane segment spans residues 8–28 (AFWTYTLITAMTPGPNNILAL). The Cytoplasmic segment spans residues 29–46 (SSATSHGFRQSTRVLAGM). A helical transmembrane segment spans residues 47–67 (SLGFLIVMLLCAGISFSLAVI). Over 68-69 (DP) the chain is Periplasmic. A helical transmembrane segment spans residues 70-90 (AAVHLLSWAGAAYIVWLAWKI). Topologically, residues 91–104 (ATSPTKEDGLQAKP) are cytoplasmic. Residues 105-125 (ISFWASFALQFVNVKIILYGV) traverse the membrane as a helical segment. Residues 126 to 141 (TALSTFVLPQTQALSW) are Periplasmic-facing. A helical transmembrane segment spans residues 142–162 (VVGVSVLLAMIGTFGNVCWAL). Topologically, residues 163–176 (AGHLFQRLFRQYGR) are cytoplasmic. A helical transmembrane segment spans residues 177–194 (QLNIVLALLLVYCAVRIF). Position 195 (tyrosine 195) is a topological domain, periplasmic.

The protein belongs to the Rht family.

The protein resides in the cell inner membrane. It carries out the reaction O-acetyl-L-serine(in) = O-acetyl-L-serine(out). The catalysed reaction is L-cysteine(in) = L-cysteine(out). Its function is as follows. Exporter of O-acetylserine (OAS) and cysteine. This chain is Cysteine/O-acetylserine efflux protein (eamB), found in Escherichia coli O9:H4 (strain HS).